We begin with the raw amino-acid sequence, 287 residues long: Succinate dehydrogenase [ubiquinone] iron-sulfur subunit, mitochondrial (287 aa).

The transit peptide at 1 to 23 (MISNVLKRASVLARSNGIQSAFY) directs the protein to the mitochondrion. Positions 51–140 (FQVYRYNEET…GDTVKVYPLP (90 aa)) constitute a 2Fe-2S ferredoxin-type domain. [2Fe-2S] cluster contacts are provided by Cys-101, Cys-106, Cys-109, and Cys-121. A 4Fe-4S ferredoxin-type domain is found at 186–216 (NRHKLDGLYECILCACCSTSCPSYWWSEGGD). [4Fe-4S] cluster contacts are provided by Cys-196, Cys-199, and Cys-202. Cys-206 is a [3Fe-4S] cluster binding site. Residue Trp-211 participates in a ubiquinone binding. [3Fe-4S] cluster is bound by residues Cys-257 and Cys-263. Cys-267 lines the [4Fe-4S] cluster pocket.

The protein belongs to the succinate dehydrogenase/fumarate reductase iron-sulfur protein family. Component of complex II composed of four subunits: the flavoprotein (FP) SDHA, iron-sulfur protein (IP) SDHB, and a cytochrome b composed of a large and a small subunit. [2Fe-2S] cluster is required as a cofactor. The cofactor is [3Fe-4S] cluster. It depends on [4Fe-4S] cluster as a cofactor.

The protein localises to the mitochondrion inner membrane. It catalyses the reaction a quinone + succinate = fumarate + a quinol. The protein operates within carbohydrate metabolism; tricarboxylic acid cycle; fumarate from succinate (eukaryal route): step 1/1. Its function is as follows. Iron-sulfur protein (IP) subunit of succinate dehydrogenase (SDH) that is involved in complex II of the mitochondrial electron transport chain and is responsible for transferring electrons from succinate to ubiquinone (coenzyme Q). This is Succinate dehydrogenase [ubiquinone] iron-sulfur subunit, mitochondrial (sdhB) from Dictyostelium discoideum (Social amoeba).